The primary structure comprises 128 residues: uncharacterized protein (128 aa).

Residues C18–D116 enclose the HTH hxlR-type domain.

This is an uncharacterized protein from Bacillus subtilis (strain 168).